The following is a 116-amino-acid chain: Large ribosomal subunit protein uL18 (116 aa).

Belongs to the universal ribosomal protein uL18 family. In terms of assembly, part of the 50S ribosomal subunit; part of the 5S rRNA/L5/L18/L25 subcomplex. Contacts the 5S and 23S rRNAs.

Functionally, this is one of the proteins that bind and probably mediate the attachment of the 5S RNA into the large ribosomal subunit, where it forms part of the central protuberance. The polypeptide is Large ribosomal subunit protein uL18 (Pseudomonas entomophila (strain L48)).